Here is a 746-residue protein sequence, read N- to C-terminus: MSLVPQRSAPPPPSSSANRAASSLAFQPASTSNSASPTSSSTSTFANGSSSSTTAYRPQPTINTSVSALQGPRSGLPAQTGLAFSVSSLSNNPPAASPITAPSSALPWSSQNPAASGSTATFPPRPVRSNTAGPDTLHTISSVSASQTVAPVMVQRSHSSIAAHQASPSLNQSSPTLDADGPASLTTQSHFVHPSRDRERSRDGTTTPGSRNTFKSVFGGFVNSMSDVFSAQKKIEISTPYDPVHLTHVGFNSDTGEFTGLPKEWQQLLQESGISRQDQEANPQAVIDIVAFYQDATQSQGGSDVWKKMGAAKGNKAPATPRTDTSSEDGIYRVAPQPVLYEKPRTAPAPPGITHPNRPSEFGSPDLRQPPSNASTSSADTALRPSRSTPAPGAAPPPNAKTTSSSNPPPCKPSPASRAPDAPAAVSAASKNAKGPGSVPRRRETKKSTIKDSEVIAKLQAICTDADPTKLYRSLQKIGQGASGGVFTAYQVGTNVSVAIKQMNLEQQPKKDLIINEILVMKESRHRNIVNFIDSFLFKGDLWVVMEYMEGGSLTDVVTCNIMTEGQIAAVSREVLEGLRHLHQHGVIHRDIKSDNVLLSLQGDIKLTDFGFCAQIGESQAKRTTMVGTPYWMAPEVVTRKEYGPKVDIWSLGIMCIEMVEGEPPYLNENPLRALYLIATNGTPKINNPENLSNTFKDFLTTSLDVDAERRPDALGMLAHPFLKRSESLRTLTPLIKAAREQTRKS.

Disordered regions lie at residues 1 to 138 and 155 to 212; these read MSLV…DTLH and QRSH…GSRN. 2 stretches are compositionally biased toward low complexity: residues 15–54 and 85–105; these read SSANRAASSLAFQPASTSNSASPTSSSTSTFANGSSSSTT and SVSSLSNNPPAASPITAPSSA. Polar residues-rich tracts occupy residues 106-121, 128-138, and 156-176; these read LPWSSQNPAASGSTAT, RSNTAGPDTLH, and RSHSSIAAHQASPSLNQSSPT. Positions 194 to 203 are enriched in basic and acidic residues; the sequence is PSRDRERSRD. In terms of domain architecture, CRIB spans 237–250; that stretch reads ISTPYDPVHLTHVG. The tract at residues 301–451 is disordered; that stretch reads GGSDVWKKMG…RRETKKSTIK (151 aa). Residues 370 to 380 are compositionally biased toward polar residues; it reads PPSNASTSSAD. A compositionally biased stretch (low complexity) spans 414–430; that stretch reads SPASRAPDAPAAVSAAS. Positions 472–723 constitute a Protein kinase domain; the sequence is YRSLQKIGQG…ALGMLAHPFL (252 aa). ATP contacts are provided by residues 478–486 and Lys501; that span reads IGQGASGGV. Asp591 acts as the Proton acceptor in catalysis.

This sequence belongs to the protein kinase superfamily. STE Ser/Thr protein kinase family. STE20 subfamily.

It is found in the cytoplasm. It localises to the nucleus. The enzyme catalyses L-seryl-[protein] + ATP = O-phospho-L-seryl-[protein] + ADP + H(+). It catalyses the reaction L-threonyl-[protein] + ATP = O-phospho-L-threonyl-[protein] + ADP + H(+). In terms of biological role, MAP4K component of the MAPK pathway required for the mating pheromone response and the regulation of cell polarity and cell cycle. Phosphorylates histone H2B to form H2BS10ph. This chain is Serine/threonine-protein kinase SMU1 (SMU1), found in Mycosarcoma maydis (Corn smut fungus).